The following is a 295-amino-acid chain: Indole-3-glycerol phosphate synthase (295 aa).

Belongs to the TrpC family.

The catalysed reaction is 1-(2-carboxyphenylamino)-1-deoxy-D-ribulose 5-phosphate + H(+) = (1S,2R)-1-C-(indol-3-yl)glycerol 3-phosphate + CO2 + H2O. It participates in amino-acid biosynthesis; L-tryptophan biosynthesis; L-tryptophan from chorismate: step 4/5. The chain is Indole-3-glycerol phosphate synthase from Synechococcus sp. (strain ATCC 27144 / PCC 6301 / SAUG 1402/1) (Anacystis nidulans).